The chain runs to 428 residues: MFVDQVKIYVKGGDGGNGMVAYRREKYVPKGGPAGGDGGKGADVVFVVEEGLRTLMDFRYQRHFKADRGQHGMSKGQHGRKSEDLLVKVPPGTVVKDEKTGQILADLVTHGQTAVIAKGGRGGRGNSRFATATNPAPEIAENGEPGQERDVILELKVLADVGLVGFPSVGKSTLLSVVSSARPKIAEYHFTTIVPNLGVVETGDNRSFVMADLPGLIEGAHAGVGLGHQFLRHIERTRVIVHVIDMSGLEGRDPYEDYVTINNELKEYNLRLTERPQVVVANKMDMPDAEENLQAFKEKVGDEVKIFPISAVTRQGVRDLLFEVANLIETTPEFPIHEVADESDTSVMYKFDTEGVKFEITRESDGTFVISGYDIEKTFKMTDFSRDESVRRFARQMRGMGIDEALRARGAKDGDIVKILEYEFEFID.

The region spanning 1-158 is the Obg domain; the sequence is MFVDQVKIYV…RDVILELKVL (158 aa). The OBG-type G domain maps to 159 to 329; it reads ADVGLVGFPS…LLFEVANLIE (171 aa). GTP is bound by residues 165–172, 190–194, 212–215, 282–285, and 310–312; these read GFPSVGKS, FTTIV, DLPG, NKMD, and SAV. Ser172 and Thr192 together coordinate Mg(2+). The region spanning 350–428 is the OCT domain; the sequence is KFDTEGVKFE…ILEYEFEFID (79 aa).

It belongs to the TRAFAC class OBG-HflX-like GTPase superfamily. OBG GTPase family. As to quaternary structure, monomer. Mg(2+) is required as a cofactor.

Its subcellular location is the cytoplasm. In terms of biological role, an essential GTPase which binds GTP, GDP and possibly (p)ppGpp with moderate affinity, with high nucleotide exchange rates and a fairly low GTP hydrolysis rate. Plays a role in control of the cell cycle, stress response, ribosome biogenesis and in those bacteria that undergo differentiation, in morphogenesis control. This chain is GTPase Obg, found in Bacillus cereus (strain ATCC 14579 / DSM 31 / CCUG 7414 / JCM 2152 / NBRC 15305 / NCIMB 9373 / NCTC 2599 / NRRL B-3711).